A 214-amino-acid chain; its full sequence is Thymidylate kinase (214 aa).

Glycine 7–serine 14 contributes to the ATP binding site.

The protein belongs to the thymidylate kinase family.

It catalyses the reaction dTMP + ATP = dTDP + ADP. Its function is as follows. Phosphorylation of dTMP to form dTDP in both de novo and salvage pathways of dTTP synthesis. The polypeptide is Thymidylate kinase (Chlorobium luteolum (strain DSM 273 / BCRC 81028 / 2530) (Pelodictyon luteolum)).